Consider the following 239-residue polypeptide: UDP-2,3-diacylglucosamine hydrolase (239 aa).

Mn(2+) contacts are provided by aspartate 8, histidine 10, aspartate 41, asparagine 78, and histidine 113. Asparagine 78–arginine 79 is a binding site for substrate. The substrate site is built by aspartate 121, serine 159, asparagine 163, lysine 166, and histidine 194. 2 residues coordinate Mn(2+): histidine 194 and histidine 196.

It belongs to the LpxH family. Requires Mn(2+) as cofactor.

The protein localises to the cell inner membrane. It catalyses the reaction UDP-2-N,3-O-bis[(3R)-3-hydroxytetradecanoyl]-alpha-D-glucosamine + H2O = 2-N,3-O-bis[(3R)-3-hydroxytetradecanoyl]-alpha-D-glucosaminyl 1-phosphate + UMP + 2 H(+). It functions in the pathway glycolipid biosynthesis; lipid IV(A) biosynthesis; lipid IV(A) from (3R)-3-hydroxytetradecanoyl-[acyl-carrier-protein] and UDP-N-acetyl-alpha-D-glucosamine: step 4/6. Hydrolyzes the pyrophosphate bond of UDP-2,3-diacylglucosamine to yield 2,3-diacylglucosamine 1-phosphate (lipid X) and UMP by catalyzing the attack of water at the alpha-P atom. Involved in the biosynthesis of lipid A, a phosphorylated glycolipid that anchors the lipopolysaccharide to the outer membrane of the cell. This is UDP-2,3-diacylglucosamine hydrolase from Shewanella sp. (strain ANA-3).